The sequence spans 187 residues: MSENYTPRLKTRYREEIRTKLNDEFSYENVMQIPGVVKVVVNMGVGDAARDSKLINGALEDLTLITGQKPELRRAKKSIANFKLREGMPIGARVTLRGDRMWEFLDRLLTVALPRIRDFRGLSDQQFDGHGNYTFGLSEQTMFYEIDVDKIDRPRGMDITVVTTATNNEEGRALLRELGFPFKKADA.

This sequence belongs to the universal ribosomal protein uL5 family. Part of the 50S ribosomal subunit; part of the 5S rRNA/L5/L18/L25 subcomplex. Contacts the 5S rRNA and the P site tRNA. Forms a bridge to the 30S subunit in the 70S ribosome.

This is one of the proteins that bind and probably mediate the attachment of the 5S RNA into the large ribosomal subunit, where it forms part of the central protuberance. In the 70S ribosome it contacts protein S13 of the 30S subunit (bridge B1b), connecting the 2 subunits; this bridge is implicated in subunit movement. Contacts the P site tRNA; the 5S rRNA and some of its associated proteins might help stabilize positioning of ribosome-bound tRNAs. This is Large ribosomal subunit protein uL5 from Corynebacterium diphtheriae (strain ATCC 700971 / NCTC 13129 / Biotype gravis).